The sequence spans 93 residues: Pyrimidine/purine nucleoside phosphorylase (93 aa).

The protein belongs to the nucleoside phosphorylase PpnP family.

It carries out the reaction a purine D-ribonucleoside + phosphate = a purine nucleobase + alpha-D-ribose 1-phosphate. The enzyme catalyses adenosine + phosphate = alpha-D-ribose 1-phosphate + adenine. The catalysed reaction is cytidine + phosphate = cytosine + alpha-D-ribose 1-phosphate. It catalyses the reaction guanosine + phosphate = alpha-D-ribose 1-phosphate + guanine. It carries out the reaction inosine + phosphate = alpha-D-ribose 1-phosphate + hypoxanthine. The enzyme catalyses thymidine + phosphate = 2-deoxy-alpha-D-ribose 1-phosphate + thymine. The catalysed reaction is uridine + phosphate = alpha-D-ribose 1-phosphate + uracil. It catalyses the reaction xanthosine + phosphate = alpha-D-ribose 1-phosphate + xanthine. Functionally, catalyzes the phosphorolysis of diverse nucleosides, yielding D-ribose 1-phosphate and the respective free bases. Can use uridine, adenosine, guanosine, cytidine, thymidine, inosine and xanthosine as substrates. Also catalyzes the reverse reactions. The sequence is that of Pyrimidine/purine nucleoside phosphorylase from Magnetococcus marinus (strain ATCC BAA-1437 / JCM 17883 / MC-1).